A 215-amino-acid polypeptide reads, in one-letter code: Ribonuclease HII (215 aa).

Residues 24-215 (GVVFGVDEVG…PIRQFYENVD (192 aa)) form the RNase H type-2 domain. Aspartate 30, glutamate 31, and aspartate 125 together coordinate a divalent metal cation.

It belongs to the RNase HII family. It depends on Mn(2+) as a cofactor. Mg(2+) is required as a cofactor.

The protein resides in the cytoplasm. It carries out the reaction Endonucleolytic cleavage to 5'-phosphomonoester.. Its function is as follows. Endonuclease that specifically degrades the RNA of RNA-DNA hybrids. This Zymomonas mobilis subsp. mobilis (strain ATCC 31821 / ZM4 / CP4) protein is Ribonuclease HII.